Here is a 114-residue protein sequence, read N- to C-terminus: Large ribosomal subunit protein bL19 (114 aa).

This sequence belongs to the bacterial ribosomal protein bL19 family.

This protein is located at the 30S-50S ribosomal subunit interface and may play a role in the structure and function of the aminoacyl-tRNA binding site. In Clavibacter michiganensis subsp. michiganensis (strain NCPPB 382), this protein is Large ribosomal subunit protein bL19.